We begin with the raw amino-acid sequence, 100 residues long: Protein translation factor SUI1 homolog (100 aa).

This sequence belongs to the SUI1 family.

This is Protein translation factor SUI1 homolog from Sulfurisphaera tokodaii (strain DSM 16993 / JCM 10545 / NBRC 100140 / 7) (Sulfolobus tokodaii).